A 399-amino-acid chain; its full sequence is Zinc metalloproteinase nas-25 (399 aa).

An N-terminal signal peptide occupies residues 1–20 (MQIYLGITICLVAFLTVIDC). The 197-residue stretch at 41–237 (QVQRDLTYRW…DQINQYYQCY (197 aa)) folds into the Peptidase M12A domain. N-linked (GlcNAc...) asparagine glycans are attached at residues Asn-52 and Asn-61. 4 disulfide bridges follow: Cys-82/Cys-236, Cys-106/Cys-126, Cys-240/Cys-260, and Cys-265/Cys-274. Residue His-134 participates in Zn(2+) binding. Glu-135 is a catalytic residue. Residues His-138 and His-144 each coordinate Zn(2+). An EGF-like domain is found at 232 to 275 (QYYQCYDSCRNAGQLANCANGGIPNPNNCQVCNCPMGYGGDLCD). Asn-371 is a glycosylation site (N-linked (GlcNAc...) asparagine).

Requires Zn(2+) as cofactor. In terms of tissue distribution, expressed in pharyngeal muscles, pharyngeal-intestinal valve, rectal gland cells and arcade cells.

It is found in the secreted. Metalloprotease. This is Zinc metalloproteinase nas-25 (nas-25) from Caenorhabditis elegans.